The primary structure comprises 431 residues: Enolase (431 aa).

Residue glutamine 167 participates in (2R)-2-phosphoglycerate binding. The Proton donor role is filled by glutamate 209. 3 residues coordinate Mg(2+): aspartate 246, glutamate 289, and aspartate 316. (2R)-2-phosphoglycerate contacts are provided by lysine 341, arginine 370, serine 371, and lysine 392. Lysine 341 functions as the Proton acceptor in the catalytic mechanism.

The protein belongs to the enolase family. As to quaternary structure, component of the RNA degradosome, a multiprotein complex involved in RNA processing and mRNA degradation. It depends on Mg(2+) as a cofactor.

It localises to the cytoplasm. The protein localises to the secreted. The protein resides in the cell surface. The enzyme catalyses (2R)-2-phosphoglycerate = phosphoenolpyruvate + H2O. Its pathway is carbohydrate degradation; glycolysis; pyruvate from D-glyceraldehyde 3-phosphate: step 4/5. Functionally, catalyzes the reversible conversion of 2-phosphoglycerate (2-PG) into phosphoenolpyruvate (PEP). It is essential for the degradation of carbohydrates via glycolysis. The polypeptide is Enolase (Shewanella sediminis (strain HAW-EB3)).